The primary structure comprises 712 residues: MNPPGSLGVLEEKEEEHLAPPILGPSIHSDNPQERIQARRLRIAARLEARRREALGEYLDGKKESEEDQSKSYKQKEESRLKLAKLLLCGTELVTNIQVAADIREIHRRVEEEEIKRQRLEKLENEVKTSQDKFDEITVKWEEGKQRRIPQELWEMLNAQQVHCAGLIEDKNKLISELQQELKMKDDQYVKDLKKQSDDICLLLERMEEQVKNVMKTFRQELQNIEKAFEVERQELLTSNKKKWERALQAHNAKELEYLMNRIKKVEDYEKQLNKQRIWDCEEYNTIKIKLEQDVQILEQQLQQMKATYQLNQEKLEYNFQVLKKRDEESTVIKSQQKRKINRLHDVLNNLRSKYNKQVKQFQEENQSLTSDYKRLVLQFKELQKAMRHFALIDDKRFREIWLMNEEEAKDLINRAFDVDRIISTHHLGLPWMAPDFWFLKNVGPISQQQQKSATQILEEVLMEAEKEGADEDSSESETYLDLPKQVSARTTRKILMLLCDESGFLIESKLLSLLLPLEKNECYLLRLDAVFSALGIENEDDLYKLVNFFLKYQTHHSPSSQEPLDLRAEKERSLVDGKSQEKEPPPSPKLIHPNDVLKILEAFVMSLRKPRDFWVPVKLLKAVRDDSKDSEYWEALTTVIPATTLNLWDALYTALEKYHLVLTQRAELLIENSSLERQNTELQQLLQQYLDTKINSELQVPPTQVFRVPTK.

The disordered stretch occupies residues 1-34 (MNPPGSLGVLEEKEEEHLAPPILGPSIHSDNPQE). Positions 100-388 (AADIREIHRR…QFKELQKAMR (289 aa)) form a coiled coil. A disordered region spans residues 557-591 (HSPSSQEPLDLRAEKERSLVDGKSQEKEPPPSPKL). Positions 565–585 (LDLRAEKERSLVDGKSQEKEP) are enriched in basic and acidic residues. Positions 663–698 (LTQRAELLIENSSLERQNTELQQLLQQYLDTKINSE) form a coiled coil.

It belongs to the DRC1 family. In terms of assembly, component of the nexin-dynein regulatory complex (N-DRC). Interacts with CCDC65/DRC2, DRC3, GAS8/DRC4 and TCTE1/DRC5.

It localises to the cytoplasm. The protein resides in the cytoskeleton. Its subcellular location is the cilium axoneme. The protein localises to the flagellum axoneme. Component of the nexin-dynein regulatory complex (N-DRC) a key regulator of ciliary/flagellar motility which maintains the alignment and integrity of the distal axoneme and regulates microtubule sliding in motile axonemes. Plays a critical role in the assembly of N-DRC and also stabilizes the assembly of multiple inner dynein arms and radial spokes. Coassembles with CCDC65/DRC2 to form a central scaffold needed for assembly of the N-DRC and its attachment to the outer doublet microtubules. This is Dynein regulatory complex protein 1 (DRC1) from Bos taurus (Bovine).